The following is a 359-amino-acid chain: Phosphoserine aminotransferase (359 aa).

Arg41 lines the L-glutamate pocket. Pyridoxal 5'-phosphate contacts are provided by residues 75 to 76 (AS), Trp101, Thr152, Asp171, and Gln194. Position 195 is an N6-(pyridoxal phosphate)lysine (Lys195). 236–237 (NT) contributes to the pyridoxal 5'-phosphate binding site.

This sequence belongs to the class-V pyridoxal-phosphate-dependent aminotransferase family. SerC subfamily. As to quaternary structure, homodimer. Pyridoxal 5'-phosphate is required as a cofactor.

It localises to the cytoplasm. It catalyses the reaction O-phospho-L-serine + 2-oxoglutarate = 3-phosphooxypyruvate + L-glutamate. The catalysed reaction is 4-(phosphooxy)-L-threonine + 2-oxoglutarate = (R)-3-hydroxy-2-oxo-4-phosphooxybutanoate + L-glutamate. It participates in amino-acid biosynthesis; L-serine biosynthesis; L-serine from 3-phospho-D-glycerate: step 2/3. It functions in the pathway cofactor biosynthesis; pyridoxine 5'-phosphate biosynthesis; pyridoxine 5'-phosphate from D-erythrose 4-phosphate: step 3/5. Catalyzes the reversible conversion of 3-phosphohydroxypyruvate to phosphoserine and of 3-hydroxy-2-oxo-4-phosphonooxybutanoate to phosphohydroxythreonine. This Acinetobacter baumannii (strain ACICU) protein is Phosphoserine aminotransferase.